A 409-amino-acid chain; its full sequence is Multidrug efflux pump Tap (409 aa).

Helical transmembrane passes span 10 to 30 (LLIL…IVAF), 46 to 66 (IVAM…GAAV), 80 to 98 (LLSA…IFGV), 104 to 123 (AVLA…GMTA), 144 to 168 (SVYE…IATL), 174 to 193 (MWVT…VLRL), 218 to 240 (FVWY…GLYM), 260 to 282 (LGWV…AVMS), 289 to 308 (ATML…IAFL), 313 to 335 (LILV…YNYV), 348 to 370 (VVGV…AGPL), and 375 to 397 (GLHA…AVFL).

It belongs to the major facilitator superfamily. Drug:H(+) antiporter-3 (DHA3) (TC 2.A.1.21) family.

It localises to the cell inner membrane. With respect to regulation, efflux activity is inhibited by carbonyl cyanide m-chlorophenylhydrazone (CCCP) and reserpine, but not by o-vanadate or chlorpromazine (CPZ). Its function is as follows. Efflux pump that contributes to intrinsic antibiotic resistance. The pump uses the electrochemical gradient as a source of energy. Confers low-level resistance to tetracycline and to several aminoglycosides, including streptomycin, gentamicin, 2'-N-ethylnetilmicin and 6'-N-ethylnetilmicin. This Mycolicibacterium fortuitum (Mycobacterium fortuitum) protein is Multidrug efflux pump Tap.